The primary structure comprises 292 residues: MSQLSQQRILSGGSPFACKVCGKLFSHKSNLTEHEHFHSREKPFECNECGKAFSQKQYVIKHQSTHSGEKLFECSDCGKAFSQKENLLTHQKIHTGEKPFECKDCGKAFIQKSNLIRHQRTHTGEKPFICKECGKTFSGKSNLTEHEKIHIGEKPFKCNECGTAFGQKKYLIKHQNIHTGEKPYECNECGKAFSQRTSLIVHVRIHSGDKPYECNVCGKAFSQSSSLTVHVRSHTGEKPYGCNECGKAFSQFSTLALHLRIHTGKKPYQCSECGKAFSQKSHHIRHQKIHTH.

C2H2-type zinc fingers lie at residues 16 to 38, 44 to 66, 72 to 94, 100 to 122, 128 to 150, 156 to 178, 184 to 206, 212 to 234, 240 to 262, and 268 to 290; these read FACK…EHFH, FECN…QSTH, FECS…QKIH, FECK…QRTH, FICK…EKIH, FKCN…QNIH, YECN…VRIH, YECN…VRSH, YGCN…LRIH, and YQCS…QKIH. Glycyl lysine isopeptide (Lys-Gly) (interchain with G-Cter in SUMO2) cross-links involve residues Lys28, Lys51, and Lys56. Glycyl lysine isopeptide (Lys-Gly) (interchain with G-Cter in SUMO) cross-links involve residues Lys157 and Lys169. Lys173 is covalently cross-linked (Glycyl lysine isopeptide (Lys-Gly) (interchain with G-Cter in SUMO2)). Residues 212–292 form an interaction with TERF2IP region; that stretch reads YECNVCGKAF…HIRHQKIHTH (81 aa).

Belongs to the krueppel C2H2-type zinc-finger protein family. As to quaternary structure, binds DNA. Interacts with SUMO conjugating enzyme UBC9/UBE2I. Interacts with the telomeric protein TERF2IP. In terms of tissue distribution, expressed in heart, brain, liver, lung, skeletal muscle and kidney, and at much lower level in spleen and testicle. Expressed in lactating mammary gland.

It localises to the nucleus. The polypeptide is Zinc finger protein OZF (Znf146) (Mus musculus (Mouse)).